We begin with the raw amino-acid sequence, 198 residues long: Protein uvp1 (198 aa).

The Resolvase/invertase-type recombinase catalytic domain occupies 1 to 140 (MIIGYARKST…SGLAAARARG (140 aa)). Ser-9 (O-(5'-phospho-DNA)-serine intermediate) is an active-site residue. The segment at residues 168 to 187 (VGAVAKRFNVSRMTIYRYTT) is a DNA-binding region (H-T-H motif).

This sequence belongs to the site-specific recombinase resolvase family.

Cooperates with the mucAB genes in the DNA repair process. Could be a resolvase-invertase protein. In Escherichia coli, this protein is Protein uvp1 (uvp1).